Reading from the N-terminus, the 213-residue chain is 3,4-dihydroxy-2-butanone 4-phosphate synthase (213 aa).

D-ribulose 5-phosphate-binding positions include 37 to 38 (RE), D42, 150 to 154 (RAGHT), and E174. E38 is a Mg(2+) binding site. H153 is a Mg(2+) binding site.

Belongs to the DHBP synthase family. In terms of assembly, homodimer. Mg(2+) is required as a cofactor. Mn(2+) serves as cofactor.

It carries out the reaction D-ribulose 5-phosphate = (2S)-2-hydroxy-3-oxobutyl phosphate + formate + H(+). The protein operates within cofactor biosynthesis; riboflavin biosynthesis; 2-hydroxy-3-oxobutyl phosphate from D-ribulose 5-phosphate: step 1/1. Catalyzes the conversion of D-ribulose 5-phosphate to formate and 3,4-dihydroxy-2-butanone 4-phosphate. The chain is 3,4-dihydroxy-2-butanone 4-phosphate synthase from Buchnera aphidicola subsp. Schizaphis graminum (strain Sg).